A 2169-amino-acid chain; its full sequence is Vitellogenin-A1 (2169 aa).

A signal peptide spans 1–46 (MATDGITSRFGFNERRRTHNRNSCRILEDKMLAKLLLLALAGLTAA). N-linked (GlcNAc...) asparagine glycosylation is found at asparagine 107 and asparagine 125. One can recognise a Vitellogenin domain in the interval 116–1008 (WMPNYEYVYN…SNDHRYPSGL (893 aa)). Tyrosine 159 and tyrosine 163 each carry sulfotyrosine. Asparagine 360, asparagine 391, and asparagine 435 each carry an N-linked (GlcNAc...) asparagine glycan. Disordered stretches follow at residues 426–481 (DKKN…DKVE) and 514–570 (NDTS…SSSE). Low complexity predominate over residues 438 to 461 (SSSSSSSSSSSSSSSESSSSSSES). N-linked (GlcNAc...) asparagine glycosylation is present at asparagine 514. Residues 517–531 (SSDSSSSDSSSSSSS) are compositionally biased toward low complexity. A glycan (N-linked (GlcNAc...) asparagine) is linked at asparagine 538. Residues 541–570 (SSYSSSSSSSSSSSSSESSSYSSSSSSSSE) show a composition bias toward low complexity. N-linked (GlcNAc...) asparagine glycans are attached at residues asparagine 587, asparagine 763, and asparagine 781. Residues tyrosine 1067, tyrosine 1070, and tyrosine 1074 each carry the sulfotyrosine modification. N-linked (GlcNAc...) asparagine glycosylation is found at asparagine 1140, asparagine 1233, and asparagine 1336. Sulfotyrosine occurs at positions 1563, 1564, and 1570. Residues asparagine 1652 and asparagine 1696 are each glycosylated (N-linked (GlcNAc...) asparagine). Tyrosine 1737, tyrosine 1806, tyrosine 1809, tyrosine 1822, tyrosine 1824, and tyrosine 1888 each carry sulfotyrosine. Residues 1770-1979 (PSCSFSNDYF…SYAITGQNCT (210 aa)) form the VWFD domain. 2 cysteine pairs are disulfide-bonded: cysteine 1772/cysteine 1942 and cysteine 1794/cysteine 1978. Asparagine 1977 carries N-linked (GlcNAc...) asparagine glycosylation. Low complexity predominate over residues 2026 to 2063 (EESSSSSSSSSSDSSSSSSSSESSSRSRSGSSSSSSSS). The tract at residues 2026–2081 (EESSSSSSSSSSDSSSSSSSSESSSRSRSGSSSSSSSSEEQKEFHPHKQEHSMKEC) is disordered. Over residues 2064 to 2079 (EEQKEFHPHKQEHSMK) the composition is skewed to basic and acidic residues.

In terms of processing, glycosylated, phosphorylated and sulfated. The large subunit is sulfated more extensively than the small one. As to expression, produced by the fat body, where it is cleaved in the rough endoplasmic reticulum or cis-Golgi before being secreted into hemolymph. It is then sequestered by a single class of receptor mediated endocytosis in the ovary.

Precursor of the egg-yolk proteins that are sources of nutrients during embryonic development. May supply aromatic amino acids to the cuticle of rapidly developing embryos. In Aedes aegypti (Yellowfever mosquito), this protein is Vitellogenin-A1 (VGA1).